Consider the following 2443-residue polypeptide: Non-reducing polyketide synthase olcA (2443 aa).

The region spanning 5-442 (IEPIAIVGTG…GANVHAILES (438 aa)) is the Ketosynthase family 3 (KS3) domain. Residues C178, H317, and H362 each act as for beta-ketoacyl synthase activity in the active site. Positions 550 to 885 (GVFTGQGAQW…AAIGSLWTYL (336 aa)) are malonyl-CoA:ACP transacylase (MAT) domain. The For acyl/malonyl transferase activity role is filled by S645. Positions 940-1070 (NCLLGVLSPD…GVLTMTLGSA (131 aa)) are N-terminal hotdog fold. One can recognise a PKS/mFAS DH domain in the interval 940 to 1231 (NCLLGVLSPD…LVPLLEDLAD (292 aa)). The product template (PT) domain stretch occupies residues 989–1497 (ALESAKLIAG…SLPVTISNMR (509 aa)). Residues 1085-1231 (MRAVDIEDFY…LVPLLEDLAD (147 aa)) form a C-terminal hotdog fold region. The methyltransferase (CMeT) domain stretch occupies residues 1771-2159 (NKRYLAHTHV…LERFTCALPP (389 aa)). The region spanning 2359 to 2434 (EILTSHLLTQ…EITSSAAAKL (76 aa)) is the Carrier domain. S2394 bears the O-(pantetheine 4'-phosphoryl)serine mark.

It carries out the reaction nicotinyl-CoA + 2 malonyl-CoA + H(+) = 4-hydroxy-6-(pyridin-3-yl)-2H-pyran-2-one + 2 CO2 + 3 CoA. Its pathway is secondary metabolite biosynthesis; terpenoid biosynthesis. Functionally, non-reducing polyketide synthase; part of the gene cluster that mediates the biosynthesis of 15-deoxyoxalicine B. The first step of the pathway is the synthesis of nicotinyl-CoA from nicotinic acid by the nicotinic acid-CoA ligase olcI. Nicotinyl-CoA is then a substrate of polyketide synthase olcA to produce 4-hydroxy-6-(3-pyridinyl)-2H-pyran-2-one (HPPO) which is further prenylated by the polyprenyl transferase olcH to yield geranylgeranyl-HPPO. Geranylgeranyl pyrophosphate is provided by the cluster-specific geranylgeranyl pyrophosphate synthase olcC. The FAD-dependent monooxygenase olcE catalyzes the epoxidation of geranylgeranyl-HPPO and the terpene cyclase olcD catalyzes the cyclization of the terpenoid component, resulting in the formation of the tricyclic terpene moiety seen in predecaturin E. The cytochrome P450 monooxygenase then catalyzes the allylic oxidation of predecaturin E, which is followed by spirocylization with concomitant loss of one molecule of water to form decaturin E. Decaturin E is the substrate of the cytochrome P450 monooxygenase olcJ which hydroxylates it at the C-29 position to form decaturin F. The short-chain dehydrogenase/reductase olcF may catalyze the oxidation of decaturin F to generate the 29-hydroxyl-27-one intermediate, and subsequent hemiacetal formation probably leads to the formation of decaturin C. The dioxygenase olcK may be a peroxisomal enzyme that catalyzes the hydroxylation of decaturin C into decaturin A once decaturin C is shuttled into the peroxisome by the MFS transporter olcL. Finally the cytochrome P450 monooxygenase olcB catalyzes the oxidative rearrangement to yield 15-deoxyoxalicine B. In the absence of olcJ, decaturin E may be shunted to a pathway in which it is oxidized to a ketone, possibly by olcF, to form decaturin D, which undergoes further allylic oxidation to yield decaturin G. Moreover, in the absence of oclK or oclL, oclB can convert decaturin C into 15-deoxyoxalicine A. This is Non-reducing polyketide synthase olcA from Penicillium canescens.